An 87-amino-acid chain; its full sequence is Prolactin-releasing peptide (87 aa).

An N-terminal signal peptide occupies residues 1–22 (MKVLRAWLLCLLMLGLALRGAA). At F53 the chain carries Phenylalanine amide. A propeptide spanning residues 58–87 (ATLGDVPKPGLRPRLTCFPLEGGAMSSQDG) is cleaved from the precursor.

Medulla oblongata and hypothalamus.

Its subcellular location is the secreted. Functionally, stimulates prolactin (PRL) release and regulates the expression of prolactin through its receptor GPR10. May stimulate lactotrophs directly to secrete PRL. The polypeptide is Prolactin-releasing peptide (PRLH) (Homo sapiens (Human)).